Here is a 473-residue protein sequence, read N- to C-terminus: Mitochondrial distribution and morphology protein 10 (473 aa).

This sequence belongs to the MDM10 family. As to quaternary structure, component of the ER-mitochondria encounter structure (ERMES) or MDM complex, composed of MMM1, MDM10, MDM12 and MDM34. Associates with the mitochondrial outer membrane sorting assembly machinery SAM(core) complex.

The protein localises to the mitochondrion outer membrane. Its function is as follows. Component of the ERMES/MDM complex, which serves as a molecular tether to connect the endoplasmic reticulum and mitochondria. Components of this complex are involved in the control of mitochondrial shape and protein biogenesis and may function in phospholipid exchange. MDM10 is involved in the late assembly steps of the general translocase of the mitochondrial outer membrane (TOM complex). Functions in the TOM40-specific route of the assembly of outer membrane beta-barrel proteins, including the association of TOM40 with the receptor TOM22 and small TOM proteins. Can associate with the SAM(core) complex as well as the MDM12-MMM1 complex, both involved in late steps of the major beta-barrel assembly pathway, that is responsible for biogenesis of all outer membrane beta-barrel proteins. May act as a switch that shuttles between both complexes and channels precursor proteins into the TOM40-specific pathway. Plays a role in mitochondrial morphology and in the inheritance of mitochondria. The polypeptide is Mitochondrial distribution and morphology protein 10 (Candida albicans (strain SC5314 / ATCC MYA-2876) (Yeast)).